The sequence spans 231 residues: Ribose-5-phosphate isomerase A (231 aa).

Substrate contacts are provided by residues 28-31, 83-86, and 96-99; these read TGST, DGAD, and KGGG. The Proton acceptor role is filled by E105. K123 contributes to the substrate binding site.

The protein belongs to the ribose 5-phosphate isomerase family. Homodimer.

It catalyses the reaction aldehydo-D-ribose 5-phosphate = D-ribulose 5-phosphate. It functions in the pathway carbohydrate degradation; pentose phosphate pathway; D-ribose 5-phosphate from D-ribulose 5-phosphate (non-oxidative stage): step 1/1. In terms of biological role, catalyzes the reversible conversion of ribose-5-phosphate to ribulose 5-phosphate. The protein is Ribose-5-phosphate isomerase A of Sinorhizobium medicae (strain WSM419) (Ensifer medicae).